A 370-amino-acid polypeptide reads, in one-letter code: MPAVADCTVVFPLRHDPASTHPDVSGLVGKAFERVNWRDAFDTFLAEERSALWAAKTAFDNTDTSAYIAARDALFPQAVSGVHGAVAFRNRAGHKLHETMEAVGLWEYLKGGATRAKGTFTFVDVCGGPGAFSQALFAMGKEHKLRLRGFGLTLRNVKGLDWYTDLPSRSFFPCYGIDGTGDVFKLENIESLCSLTCKENVRLVVADGGFDVPTEVVNFQETISCRIVYGQWLSAVKLLRPGGCFVLKLFDCFSPFTRAILFLTTHLYESVQVVKPRHSRVVNSERYLVCIGFIGAPKQWLEHFERCYQEGFVDNDNIPTVLPTSLFSGDKIFGADVERMSATIASNQVSGLHAILEKLQSKPAMEEVKS.

The region spanning 87-294 (AFRNRAGHKL…ERYLVCIGFI (208 aa)) is the RrmJ-type SAM-dependent 2'-O-MTase domain. Positions 130 and 207 each coordinate S-adenosyl-L-methionine. The active-site Proton acceptor is Lys-248.

As to quaternary structure, component of a complex composed of CBF5, GAR1, NHP2, MTR1, NOP10 and Tb11.01.8210.

The protein localises to the nucleus. The enzyme catalyses a 5'-end (N(7)-methyl 5'-triphosphoguanosine)-ribonucleoside in mRNA + S-adenosyl-L-methionine = a 5'-end (N(7)-methyl 5'-triphosphoguanosine)-(2'-O-methyl-ribonucleoside) in mRNA + S-adenosyl-L-homocysteine + H(+). S-adenosyl-L-methionine-dependent methyltransferase that mediates RNA cap1 2'-O-ribose methylation to the 5'-cap structure of spliced leader and U1 small nuclear RNAs. Methylates the ribose of the first nucleotide of a m(7)GpppG-capped RNA to produce m(7)GpppNmp (cap1). Cap1 modification is linked to higher levels of translation. Recognizes a guanosine cap on RNA independent of its N(7) methylation status. This chain is Cap-specific mRNA (nucleoside-2'-O-)-methyltransferase 1 (MTR1), found in Trypanosoma brucei brucei (strain 927/4 GUTat10.1).